The chain runs to 225 residues: Membrane protein (225 aa).

Residues M1–E20 lie on the Virion surface side of the membrane. The chain crosses the membrane as a helical span at residues Y21–A41. Residues T42–K51 lie on the Intravirion side of the membrane. The chain crosses the membrane as a helical span at residues M52–Y72. The Virion surface portion of the chain corresponds to P73 to G77. Residues G78–I98 form a helical membrane-spanning segment. At Q99–T225 the chain is on the intravirion side.

Belongs to the gammacoronaviruses M protein family. In terms of assembly, homomultimer. Interacts with envelope E protein in the budding compartment of the host cell, which is located between endoplasmic reticulum and the Golgi complex. Forms a complex with HE and S proteins. Interacts with nucleocapsid N protein. This interaction probably participates in RNA packaging into the virus.

It localises to the virion membrane. The protein resides in the host Golgi apparatus membrane. In terms of biological role, component of the viral envelope that plays a central role in virus morphogenesis and assembly via its interactions with other viral proteins. The protein is Membrane protein of Gallus gallus (Chicken).